We begin with the raw amino-acid sequence, 355 residues long: MPRTISLAVVPGDGIGPEVVHEALRVLREAVPADVSLDTTQYPFGAGHFLETGEILTDSDLAALAQHDAILLGAVGGDPRDARLAGGIIERGLLLKLRFAFDHYINLRPTTLLPGVTSPLASPGEVDFVVVREGTEGPYAGNGGVLRRGTEHEIATEVSVNTAHGVERTVRFAFDLASKRERKRVTLVHKTNVLTFAGSLWQRTVDRVAAEHPDVAVDYLHVDATMIFLVTDPSRFDVIVSDNLFGDIITDLAAAISGGIGLAASGNVNPTGAFPSMFEPVHGSAPDIAGQQKADPTAAILSVSLLLDHLGLPEAAARVTAAVSADLAARAAGDPAPRSTAEVGDAVIRALSTNH.

Substrate-binding residues include Arg98, Arg108, Arg132, and Asp223. Mg(2+)-binding residues include Asp223, Asp247, and Asp251. 283-295 is a binding site for NAD(+); sequence GSAPDIAGQQKAD.

Belongs to the isocitrate and isopropylmalate dehydrogenases family. LeuB type 2 subfamily. Homodimer. Requires Mg(2+) as cofactor. The cofactor is Mn(2+).

Its subcellular location is the cytoplasm. The catalysed reaction is (2R,3S)-3-isopropylmalate + NAD(+) = 4-methyl-2-oxopentanoate + CO2 + NADH. The protein operates within amino-acid biosynthesis; L-leucine biosynthesis; L-leucine from 3-methyl-2-oxobutanoate: step 3/4. Functionally, catalyzes the oxidation of 3-carboxy-2-hydroxy-4-methylpentanoate (3-isopropylmalate) to 3-carboxy-4-methyl-2-oxopentanoate. The product decarboxylates to 4-methyl-2 oxopentanoate. This Clavibacter michiganensis subsp. michiganensis (strain NCPPB 382) protein is 3-isopropylmalate dehydrogenase.